The sequence spans 687 residues: Leucine-rich repeat and fibronectin type III domain-containing protein 1-like protein (687 aa).

Residues 1 to 17 (MEWLIFSLLLLAVSASG) form the signal peptide. One can recognise an LRRNT domain in the interval 18–51 (QLCPKRCMCQNLSPSLAILCAKTGLLFVPTVIDR). Residues 18–527 (QLCPKRCMCQ…LRSHFLGGTM (510 aa)) are Extracellular-facing. LRR repeat units follow at residues 52 to 73 (RTVE…DFAN), 76 to 97 (SLLH…TFAD), 100 to 121 (RLRA…HFRG), 124 to 145 (NLRH…AFDD), 149 to 170 (TLED…TIGR), 173 to 194 (NVNT…IFSN), and 197 to 218 (KLAR…PLFL). The N-linked (GlcNAc...) asparagine glycan is linked to Asn73. An LRRCT domain is found at 241 to 287 (NPLHCNCELLWLRRLTREDDLETCASPPDLTAKYFWTIPEEEFICDP). Residues 287–376 (PPVITRKSPK…STGTVELVVS (90 aa)) form the Ig-like domain. Cys309 and Cys358 are disulfide-bonded. Residues Asn331, Asn340, Asn346, Asn383, Asn410, and Asn450 are each glycosylated (N-linked (GlcNAc...) asparagine). Positions 384 to 412 (STNRIREPDPGPSDILTSAKSTSSVSNET) are disordered. Over residues 398 to 412 (ILTSAKSTSSVSNET) the composition is skewed to polar residues. One can recognise a Fibronectin type-III domain in the interval 415–510 (QERKVVLAEL…VGCVTFVTET (96 aa)). Residues 528–548 (IIIIGGIIVASVLVFIIILMI) form a helical membrane-spanning segment. Residues 549 to 687 (RYKVYSQHGA…AQRDWSDFKI (139 aa)) lie on the Cytoplasmic side of the membrane. 2 disordered regions span residues 563–601 (GTAM…GSLG) and 630–687 (EDIV…DFKI). Composition is skewed to polar residues over residues 565-576 (AMTNVRSQTNGG) and 657-672 (EGTS…SPQV). Over residues 673 to 687 (SDEKKAQRDWSDFKI) the composition is skewed to basic and acidic residues.

The protein belongs to the LRFN family.

It localises to the membrane. The protein resides in the synapse. Functionally, may be involved in the regulation of excitatory synapses. This Danio rerio (Zebrafish) protein is Leucine-rich repeat and fibronectin type III domain-containing protein 1-like protein (lrfn1l).